The following is a 451-amino-acid chain: Trigger factor (451 aa).

Residues glycine 173–proline 258 form the PPIase FKBP-type domain.

The protein belongs to the FKBP-type PPIase family. Tig subfamily.

Its subcellular location is the cytoplasm. It catalyses the reaction [protein]-peptidylproline (omega=180) = [protein]-peptidylproline (omega=0). Its function is as follows. Involved in protein export. Acts as a chaperone by maintaining the newly synthesized protein in an open conformation. Functions as a peptidyl-prolyl cis-trans isomerase. This chain is Trigger factor, found in Cupriavidus pinatubonensis (strain JMP 134 / LMG 1197) (Cupriavidus necator (strain JMP 134)).